The primary structure comprises 236 residues: Small ribosomal subunit protein uS3 (236 aa).

The 69-residue stretch at 39–107 folds into the KH type-2 domain; that stretch reads VREFLKKSLS…PAQISITEIK (69 aa).

Belongs to the universal ribosomal protein uS3 family. Part of the 30S ribosomal subunit. Forms a tight complex with proteins S10 and S14.

Its function is as follows. Binds the lower part of the 30S subunit head. Binds mRNA in the 70S ribosome, positioning it for translation. This Wigglesworthia glossinidia brevipalpis protein is Small ribosomal subunit protein uS3.